The sequence spans 649 residues: Putative cystathionine gamma-synthase YML082W (649 aa).

Residues 242-273 are disordered; it reads NEANHGEDHDGGISGEVDSQEEPHNGLVSTIP. Phosphoserine is present on S287. Residue K451 is modified to N6-(pyridoxal phosphate)lysine.

This sequence belongs to the trans-sulfuration enzymes family. MET7 subfamily. Pyridoxal 5'-phosphate serves as cofactor.

It catalyses the reaction O-succinyl-L-homoserine + L-cysteine = L,L-cystathionine + succinate + H(+). Its pathway is amino-acid biosynthesis; L-methionine biosynthesis via de novo pathway; L-cystathionine from O-succinyl-L-homoserine: step 1/1. Its function is as follows. Catalyzes the formation of L-cystathionine from O-succinyl-L-homoserine (OSHS) and L-cysteine, via a gamma-replacement reaction. In the absence of thiol, catalyzes gamma-elimination to form 2-oxobutanoate, succinate and ammonia. The chain is Putative cystathionine gamma-synthase YML082W from Saccharomyces cerevisiae (strain ATCC 204508 / S288c) (Baker's yeast).